We begin with the raw amino-acid sequence, 443 residues long: GTPase Der (443 aa).

2 EngA-type G domains span residues 3–167 and 176–349; these read PTLV…PEPE and VRVA…AAAM. GTP is bound by residues 9–16, 56–60, 119–122, 182–189, 229–233, and 294–297; these read GRPNVGKS, DTGGF, NKAE, DTAGM, and NKWD. Positions 350–434 constitute a KH-like domain; that stretch reads AKMTTPRLTR…PLRIQFVTAK (85 aa).

It belongs to the TRAFAC class TrmE-Era-EngA-EngB-Septin-like GTPase superfamily. EngA (Der) GTPase family. In terms of assembly, associates with the 50S ribosomal subunit.

In terms of biological role, GTPase that plays an essential role in the late steps of ribosome biogenesis. In Dechloromonas aromatica (strain RCB), this protein is GTPase Der.